The sequence spans 44 residues: MRDLKTYLSVAPVLSTLWFGSLAGLLIEINRLFPDALTFPFFSF.

Residues 7–27 traverse the membrane as a helical segment; it reads YLSVAPVLSTLWFGSLAGLLI.

It belongs to the PsaJ family.

It localises to the plastid. Its subcellular location is the chloroplast thylakoid membrane. May help in the organization of the PsaE and PsaF subunits. This is Photosystem I reaction center subunit IX from Arabis hirsuta (Hairy rock-cress).